The sequence spans 279 residues: HTH-type transcriptional regulator HdfR (279 aa).

The HTH lysR-type domain occupies 1 to 58; it reads MDTELLKTFLEVSRTRHFGRAAESLYLTQSAVSFRIRQLENQLGVNLFTRHRNNIRLT. The H-T-H motif DNA-binding region spans 18–37; the sequence is FGRAAESLYLTQSAVSFRIR.

It belongs to the LysR transcriptional regulatory family.

Negatively regulates the transcription of the flagellar master operon flhDC by binding to the upstream region of the operon. The polypeptide is HTH-type transcriptional regulator HdfR (Escherichia coli (strain ATCC 8739 / DSM 1576 / NBRC 3972 / NCIMB 8545 / WDCM 00012 / Crooks)).